The sequence spans 84 residues: Small ribosomal subunit protein bS16 (84 aa).

The protein belongs to the bacterial ribosomal protein bS16 family.

This Methylococcus capsulatus (strain ATCC 33009 / NCIMB 11132 / Bath) protein is Small ribosomal subunit protein bS16.